The following is a 200-amino-acid chain: 3-isopropylmalate dehydratase small subunit (200 aa).

This sequence belongs to the LeuD family. LeuD type 1 subfamily. Heterodimer of LeuC and LeuD.

The catalysed reaction is (2R,3S)-3-isopropylmalate = (2S)-2-isopropylmalate. It participates in amino-acid biosynthesis; L-leucine biosynthesis; L-leucine from 3-methyl-2-oxobutanoate: step 2/4. Its function is as follows. Catalyzes the isomerization between 2-isopropylmalate and 3-isopropylmalate, via the formation of 2-isopropylmaleate. This is 3-isopropylmalate dehydratase small subunit from Vibrio atlanticus (strain LGP32) (Vibrio splendidus (strain Mel32)).